The primary structure comprises 145 residues: Probable transport accessory protein MmpS2 (145 aa).

The helical transmembrane segment at 11–31 (MWLLLAIVVVAVVGGLGIYRL) threads the bilayer.

Belongs to the MmpS family.

It localises to the cell membrane. The protein is Probable transport accessory protein MmpS2 (mmpS2) of Mycobacterium bovis (strain ATCC BAA-935 / AF2122/97).